Reading from the N-terminus, the 222-residue chain is Large ribosomal subunit protein bL25 (222 aa).

It belongs to the bacterial ribosomal protein bL25 family. CTC subfamily. As to quaternary structure, part of the 50S ribosomal subunit; part of the 5S rRNA/L5/L18/L25 subcomplex. Contacts the 5S rRNA. Binds to the 5S rRNA independently of L5 and L18.

Its function is as follows. This is one of the proteins that binds to the 5S RNA in the ribosome where it forms part of the central protuberance. This is Large ribosomal subunit protein bL25 from Ruthia magnifica subsp. Calyptogena magnifica.